Here is a 168-residue protein sequence, read N- to C-terminus: Diphosphoinositol polyphosphate phosphohydrolase 1 (168 aa).

The residue at position 1 (Met-1) is an N-acetylmethionine. Substrate is bound by residues Arg-10, 18 to 20 (KKR), and 39 to 41 (SSR). The region spanning 17–142 (YKKRAACLCF…KPVQASYFEA (126 aa)) is the Nudix hydrolase domain. Mg(2+)-binding residues include Gly-50 and Glu-66. The Nudix box signature appears at 51 to 72 (GGMEPEEEPSVAAVREVCEEAG). Residue Glu-69 is the Proton acceptor of the active site. Glu-70 is a binding site for Mg(2+). Substrate is bound by residues 89–91 (RKH), Arg-115, and Lys-133.

It belongs to the Nudix hydrolase family. DIPP subfamily. As to quaternary structure, monomer. Mg(2+) serves as cofactor. The cofactor is Mn(2+). Requires Zn(2+) as cofactor.

The protein localises to the cytoplasm. It localises to the nucleus. It catalyses the reaction diphospho-myo-inositol polyphosphate + H2O = myo-inositol polyphosphate + phosphate.. The enzyme catalyses 5-diphospho-1D-myo-inositol 1,2,3,4,6-pentakisphosphate + H2O = 1D-myo-inositol hexakisphosphate + phosphate + H(+). The catalysed reaction is 3,5-bis(diphospho)-1D-myo-inositol 1,2,4,6-tetrakisphosphate + H2O = 3-diphospho-1D-myo-inositol 1,2,4,5,6-pentakisphosphate + phosphate + 2 H(+). It carries out the reaction [phosphate](n+1) + n H2O = (n+1) phosphate + n H(+). It catalyses the reaction P(1),P(5)-bis(5'-adenosyl) pentaphosphate + H2O = ADP + ATP + 2 H(+). The enzyme catalyses P(1),P(6)-bis(5'-adenosyl) hexaphosphate + H2O = 2 ATP + 2 H(+). The catalysed reaction is P(1),P(4)-bis(5'-adenosyl) tetraphosphate + H2O = AMP + ATP + 2 H(+). It carries out the reaction a 5'-end (N(7)-methyl 5'-triphosphoguanosine)-ribonucleoside in mRNA + H2O = N(7)-methyl-GMP + a 5'-end diphospho-ribonucleoside in mRNA + 2 H(+). It catalyses the reaction a 5'-end (N(7)-methyl 5'-triphosphoguanosine)-ribonucleoside in mRNA + H2O = N(7)-methyl-GDP + a 5'-end phospho-ribonucleoside in mRNA + 2 H(+). With respect to regulation, diphosphoinositol polyphosphate phosphohydrolase is inhibited by fluoride and InsP6. Cleaves a beta-phosphate from the diphosphate groups in PP-InsP5 (diphosphoinositol pentakisphosphate) and [PP]2-InsP4 (bisdiphosphoinositol tetrakisphosphate), suggesting that it may play a role in signal transduction. InsP6 (inositol hexakisphosphate) is not a substrate. Acts as a negative regulator of the ERK1/2 pathway. Also able to catalyze the hydrolysis of dinucleoside oligophosphates, with diadenosine 5',5'''-P1,P6-hexaphosphate (Ap6A) and diadenosine 5',5'''- P1,P5-pentaphosphate (Ap5A) being the preferred substrates. The major reaction products are ADP and p4a from Ap6A and ADP and ATP from Ap5A. Also able to hydrolyze 5- phosphoribose 1-diphosphate. Acts as a decapping enzyme that can hydrolyze both monomethylated and unmethylated capped RNAs. Hydrolyzes monomethylated capped RNA after both the alpha- and beta-phosphates generating m7GMP + ppRNA and m7GDP + pRNA. Modulates the stability of a subset of mRNAs implicated in cell motility. Divalent cations zinc, magnesium and manganese determine its substrate specificity. Exhibits endopolyphosphatase activity in the presence of zinc ions. Exhibits diphosphoinositol polyphosphate phosphohydrolase in the presence of magnesium ions and diadenosine hexaphosphate hydrolase activity in the presence of manganese ions. Plays an important role in limiting DNA damage and maintaining cell survival upon oxidative stress via its endopolyphosphatase activity. The sequence is that of Diphosphoinositol polyphosphate phosphohydrolase 1 from Rattus norvegicus (Rat).